Here is a 310-residue protein sequence, read N- to C-terminus: p-hydroxybenzoic acid efflux pump subunit AaeA (310 aa).

Residues 12 to 32 (AITLVLVILAFIAIFRAWVYY) form a helical membrane-spanning segment.

This sequence belongs to the membrane fusion protein (MFP) (TC 8.A.1) family.

Its subcellular location is the cell inner membrane. In terms of biological role, forms an efflux pump with AaeB. This is p-hydroxybenzoic acid efflux pump subunit AaeA from Escherichia fergusonii (strain ATCC 35469 / DSM 13698 / CCUG 18766 / IAM 14443 / JCM 21226 / LMG 7866 / NBRC 102419 / NCTC 12128 / CDC 0568-73).